The primary structure comprises 162 residues: RNA replication protein (162 aa).

This sequence belongs to the potexvirus/carlavirus RNA replication protein family.

It catalyses the reaction RNA(n) + a ribonucleoside 5'-triphosphate = RNA(n+1) + diphosphate. The enzyme catalyses ATP + H2O = ADP + phosphate + H(+). Functionally, RNA replication. The central part of this protein possibly functions as an ATP-binding helicase. The polypeptide is RNA replication protein (Lilium formosanum).